The chain runs to 250 residues: Zinc finger protein lsy-27 (250 aa).

2 consecutive C2H2-type zinc fingers follow at residues 25–48 (FVCS…QLMH) and 52–75 (HTCM…RNEH). The segment at 81 to 104 (FTCGCCNWTFASKRQLTEHTKCIQ) adopts a C2H2-type 3; degenerate zinc-finger fold. Disordered regions lie at residues 126-177 (IQST…EAER) and 226-250 (QKVK…QEIE). The span at 148–165 (SLSPSSSVSTSISSRDAS) shows a compositional bias: low complexity. A compositionally biased stretch (basic and acidic residues) spans 239–250 (MIPEKHVKQEIE).

Functionally, involved in regulating left/right asymmetric differentiation of the gustatory ASE neurons. Plays a role in modulating expression of LIM/homeobox protein lim-6. This is Zinc finger protein lsy-27 from Caenorhabditis elegans.